The primary structure comprises 134 residues: DNA-directed RNA polymerase subunit omega (134 aa).

It belongs to the RNA polymerase subunit omega family. In terms of assembly, the RNAP catalytic core consists of 2 alpha, 1 beta, 1 beta' and 1 omega subunit. When a sigma factor is associated with the core the holoenzyme is formed, which can initiate transcription.

It catalyses the reaction RNA(n) + a ribonucleoside 5'-triphosphate = RNA(n+1) + diphosphate. Its function is as follows. Promotes RNA polymerase assembly. Latches the N- and C-terminal regions of the beta' subunit thereby facilitating its interaction with the beta and alpha subunits. The polypeptide is DNA-directed RNA polymerase subunit omega (Brucella anthropi (strain ATCC 49188 / DSM 6882 / CCUG 24695 / JCM 21032 / LMG 3331 / NBRC 15819 / NCTC 12168 / Alc 37) (Ochrobactrum anthropi)).